We begin with the raw amino-acid sequence, 381 residues long: MGCLGNSSKTAEDQGVDEKERREANKKIEKQLQKERLAYKATHRLLLLGAGESGKSTIVKQMRILHVNGFNPEEKKQKILDIRKNVKDAIVTIVSAMSTIIPPVPLANPENQFRSDYIKSIAPITDFEYSQEFFDHVKKLWDDEGVKACFERSNEYQLIDCAQYFLERIDSVSLVDYTPTDQDLLRCRVLTSGIFETRFQVDKVNFHMFDVGGQRDERRKWIQCFNDVTAIIYVAACSSYNMVIREDNNTNRLRESLDLFESIWNNRWLRTISIILFLNKQDMLAEKVLAGKSKIEDYFPEYANYTVPEDATPDAGEDPKVTRAKFFIRDLFLRISTATGDGKHYCYPHFTCAVDTENIRRVFNDCRDIIQRMHLKQYELL.

The tract at residues 1–25 (MGCLGNSSKTAEDQGVDEKERREAN) is disordered. A lipid anchor (N-palmitoyl glycine) is attached at Gly-2. The S-palmitoyl cysteine moiety is linked to residue Cys-3. Residues 10–25 (TAEDQGVDEKERREAN) show a composition bias toward basic and acidic residues. Residues 41-381 (ATHRLLLLGA…RMHLKQYELL (341 aa)) form the G-alpha domain. Residues 44-57 (RLLLLGAGESGKST) are G1 motif. Glu-52, Ser-53, Gly-54, Lys-55, Ser-56, and Thr-57 together coordinate GTP. Ser-56 contacts Mg(2+). Position 178 is a phosphothreonine (Thr-178). The tract at residues 183-191 (DLLRCRVLT) is G2 motif. Residues Leu-185, Arg-186, and Thr-191 each contribute to the GTP site. The Mg(2+) site is built by Thr-191 and Asp-210. Residues 206–215 (FHMFDVGGQR) are G3 motif. The GTP site is built by Gly-213, Asn-279, Lys-280, Asp-282, and Ala-353. A G4 motif region spans residues 275 to 282 (ILFLNKQD). A G5 motif region spans residues 351–356 (TCAVDT).

Belongs to the G-alpha family. G(s) subfamily. In terms of assembly, g proteins are composed of 3 units; alpha, beta and gamma. The alpha chain contains the guanine nucleotide binding site. Interacts with GAS2L2. Interacts (GDP-bound form) with RIC8B (via C-terminus); promoting GNAL folding and association with the plasma membrane.

The protein resides in the cell membrane. It catalyses the reaction GTP + H2O = GDP + phosphate + H(+). Guanine nucleotide-binding protein (G protein) involved as transducer in olfactory signal transduction controlled by G protein-coupled receptors (GPCRs). Contains the guanine nucleotide binding site and alternates between an active, GTP-bound state and an inactive, GDP-bound state. Signaling by an activated GPCR promotes GDP release and GTP binding. The alpha subunit has a low GTPase activity that converts bound GTP to GDP, thereby terminating the signal. Both GDP release and GTP hydrolysis are modulated by numerous regulatory proteins. GNAL/G(olf) alpha specifically mediates olfactory signal transduction within the olfactory neuroepithelium and the basal ganglia following GPCRs activation. Acts by promoting the specific activation of adenylyl cyclase ADCY3, resulting in increased levels of the signaling molecule cAMP. In Mus musculus (Mouse), this protein is Guanine nucleotide-binding protein G(olf) subunit alpha.